Consider the following 234-residue polypeptide: Ribonuclease 3 (234 aa).

The region spanning 6-134 (RKSLEERVGH…IVGALYLDGG (129 aa)) is the RNase III domain. A Mg(2+)-binding site is contributed by Glu47. Asp51 is a catalytic residue. Residues Ser120 and Glu123 each coordinate Mg(2+). The active site involves Glu123. The DRBM domain occupies 162-231 (DYKTRLQELV…AKNALEMKYK (70 aa)).

The protein belongs to the ribonuclease III family. Homodimer. Requires Mg(2+) as cofactor.

It localises to the cytoplasm. It catalyses the reaction Endonucleolytic cleavage to 5'-phosphomonoester.. Digests double-stranded RNA. Involved in the processing of primary rRNA transcript to yield the immediate precursors to the large and small rRNAs (23S and 16S). Processes some mRNAs, and tRNAs when they are encoded in the rRNA operon. Processes pre-crRNA and tracrRNA of type II CRISPR loci if present in the organism. The protein is Ribonuclease 3 of Bdellovibrio bacteriovorus (strain ATCC 15356 / DSM 50701 / NCIMB 9529 / HD100).